Reading from the N-terminus, the 146-residue chain is Prefoldin subunit alpha 1 (146 aa).

Belongs to the prefoldin subunit alpha family. Heterohexamer of two alpha and four beta subunits.

The protein resides in the cytoplasm. Functionally, molecular chaperone capable of stabilizing a range of proteins. Seems to fulfill an ATP-independent, HSP70-like function in archaeal de novo protein folding. In Thermococcus kodakarensis (strain ATCC BAA-918 / JCM 12380 / KOD1) (Pyrococcus kodakaraensis (strain KOD1)), this protein is Prefoldin subunit alpha 1.